The sequence spans 43 residues: Subtilosin-A (43 aa).

A propeptide spanning residues 1–8 is cleaved from the precursor; sequence MKKAVIVE. Residues 9–43 constitute a cross-link (cyclopeptide (Asn-Gly)); the sequence is NKGCATCSIGAACLVDGPIPDFEIAGATGLFGLWG. Positions 12–39 form a cross-link, 2-cysteinyl-D-phenylalanine (Cys-Phe); the sequence is CATCSIGAACLVDGPIPDFEIAGATGLF. A cross-link (2-cysteinyl-D-allo-threonine (Cys-Thr)) is located at residues 15-36; that stretch reads CSIGAACLVDGPIPDFEIAGAT. Residues 21-30 constitute a cross-link (2-cysteinyl-L-phenylalanine (Cys-Phe)); the sequence is CLVDGPIPDF.

Belongs to the bacteriocin class V family. This sactipeptide undergoes unique processing steps that include proteolytic cleavage after Glu-8, and covalent linkage of the alpha-amino of Asn-9 with the carboxyl of Gly-43 to form a cyclopeptide. Thioether cross-links are formed between cysteines and the alpha-carbons of other amino acids, Cys-12 to Phe-39, Cys-15 to Thr-36, and Cys-21 to Phe-30. In forming these cross-links, Thr-36 and Phe-39 are converted to D-amino acids. Propeptide cleavage and cyclopeptide formation only occur after all 3 thioether cross-links are formed.

The protein localises to the secreted. Its function is as follows. Has bacteriocidal activity against some Gram-positive bacteria such as Listeria, some species of Bacillus and E.faecium. A single mutation (Thr-14-Ile) confers hemolytic activity against rabbit and human blood. The chain is Subtilosin-A (sboA) from Bacillus subtilis (strain 168).